The following is a 147-amino-acid chain: Large ribosomal subunit protein uL15 (147 aa).

Over residues 1-13 the composition is skewed to basic and acidic residues; sequence MKLENLKSKEGSR. A disordered region spans residues 1–54; that stretch reads MKLENLKSKEGSRHKTKRVGRGFGSGIGKTSTRGSKGQKSRKSGHTRPGFEGGQ. Basic residues predominate over residues 36–45; that stretch reads KGQKSRKSGH.

This sequence belongs to the universal ribosomal protein uL15 family. In terms of assembly, part of the 50S ribosomal subunit.

Its function is as follows. Binds to the 23S rRNA. This chain is Large ribosomal subunit protein uL15, found in Malacoplasma penetrans (strain HF-2) (Mycoplasma penetrans).